The chain runs to 344 residues: Probable glucan endo-1,3-beta-glucosidase At4g16260 (344 aa).

An N-terminal signal peptide occupies residues 1–21 (MTTLFLLIALFITTILNPTSG). The active-site Proton donor is glutamate 116. Glutamate 257 (nucleophile) is an active-site residue.

It belongs to the glycosyl hydrolase 17 family. As to quaternary structure, (Microbial infection) Interacts with the 30C02 effector protein (AC G3GD54) of the beet cyst nematode Heterodera schachtii. Interaction with the 30C02 effector protein may potentially suppress beta-1,3-glucanase activity and plant defense.

Its subcellular location is the secreted. The catalysed reaction is Hydrolysis of (1-&gt;3)-beta-D-glucosidic linkages in (1-&gt;3)-beta-D-glucans.. Its function is as follows. May be involved in plant defense against cyst nematode pathogens. In Arabidopsis thaliana (Mouse-ear cress), this protein is Probable glucan endo-1,3-beta-glucosidase At4g16260.